A 136-amino-acid chain; its full sequence is Large ribosomal subunit protein uL16 (136 aa).

Belongs to the universal ribosomal protein uL16 family. In terms of assembly, part of the 50S ribosomal subunit.

Functionally, binds 23S rRNA and is also seen to make contacts with the A and possibly P site tRNAs. The protein is Large ribosomal subunit protein uL16 of Ruthia magnifica subsp. Calyptogena magnifica.